A 324-amino-acid chain; its full sequence is Casein kinase I (324 aa).

Residues Tyr9–Ile278 form the Protein kinase domain. Residues Leu15 to Ile23 and Lys38 contribute to the ATP site. The active-site Proton acceptor is Asp128.

The protein belongs to the protein kinase superfamily. CK1 Ser/Thr protein kinase family. Casein kinase I subfamily. In terms of assembly, interacts with rhoptry protein RON3; the interaction is direct. Interacts with CK2alpha; the interaction is direct. Interacts with nucleosome assembly protein NAPL. Interacts with RAB5b. Interacts with host GAPVD1. Interacts with host SNX22. Mg(2+) is required as a cofactor.

The protein resides in the cytoplasm. It localises to the cytoplasmic vesicle. Its subcellular location is the secretory vesicle. The protein localises to the microneme. It is found in the secreted. The protein resides in the host cell surface. The enzyme catalyses L-seryl-[protein] + ATP = O-phospho-L-seryl-[protein] + ADP + H(+). It catalyses the reaction L-threonyl-[protein] + ATP = O-phospho-L-threonyl-[protein] + ADP + H(+). Functionally, serine/threonine-protein kinase likely to be involved in many cellular processes. Phosphorylates rhoptry protein RON3, nucleosome assembly protein NAPL and DNA/RNA-binding protein ALBA4 in vitro. This chain is Casein kinase I, found in Plasmodium falciparum (isolate Dd2).